Consider the following 533-residue polypeptide: Na(+)/H(+) antiporter NhaB (533 aa).

The next 11 membrane-spanning stretches (helical) occupy residues 10-30 (IGNF…SFLI), 67-87 (PGGL…SQVL), 98-118 (LLLV…LFVF), 131-165 (VSLL…FYSI), 209-229 (LLMH…VGEP), 247-267 (IRMS…CFIV), 310-330 (AFVG…VGLI), 355-375 (EEAL…AVII), 396-416 (LVIF…VFVG), 454-474 (ATPN…APLI), and 481-501 (MVWM…MAIQ).

This sequence belongs to the NhaB Na(+)/H(+) (TC 2.A.34) antiporter family.

Its subcellular location is the cell inner membrane. The enzyme catalyses 2 Na(+)(in) + 3 H(+)(out) = 2 Na(+)(out) + 3 H(+)(in). Functionally, na(+)/H(+) antiporter that extrudes sodium in exchange for external protons. The chain is Na(+)/H(+) antiporter NhaB from Shewanella sp. (strain ANA-3).